Here is a 403-residue protein sequence, read N- to C-terminus: MSKDFDLIIRNAYLSEKDSVYDIGIVGDRIIKIEAKIEGTVKDEIDAKGNLVSPGFVDAHTHMDKSFTSTGERLPKFWSRPYTRDAAIEDGLKYYKNATHEEIKRHVIEHAHMQVLHGTLYTRTHVDVDSVAKTKAVEAVLEAKEELKDLIDIQVVAFAQSGFFVDLESESLIRKSLDMGCDLVGGVDPATRENNVEGSLDLCFKLAKEYDVDIDYHIHDIGTVGVYSINRLAQKTIENGYKGRVTTSHAWCFADAPSEWLDEAIPLYKDSGMKFVTCFSSTPPTMPVIKLLEAGINLGCASDNIRDFWVPFGNGDMVQGALIETQRLELKTNRDLGLIWKMITSEGARVLGIEKNYGIEVGKKADLVVLNSLSPQWAIIDQAKRLCVIKNGRIIVKDEVIVA.

Zn(2+) contacts are provided by histidine 60, histidine 62, and histidine 217. The Proton donor/acceptor role is filled by histidine 249. Aspartate 303 contributes to the Zn(2+) binding site.

It belongs to the metallo-dependent hydrolases superfamily. N-acyl-D-amino-acid deacylase family. As to quaternary structure, homotetramer. Zn(2+) serves as cofactor.

The protein resides in the cytoplasm. The catalysed reaction is N-isopropylammelide + H2O + H(+) = isopropylamine + cyanurate. Its pathway is xenobiotic degradation; atrazine degradation; cyanurate from atrazine: step 3/3. Inhibited by N-ethylammeline, N-hydroxyethylammeline, N-isopropylammeline, ammeline and 2-amino-4hydroxy-1,3,5-s-triazine. Transforms N-isopropylammelide to cyanuric acid and isopropylamine. The sequence is that of N-isopropylammelide isopropyl amidohydrolase (atzC) from Pseudomonas sp. (strain ADP).